Here is a 440-residue protein sequence, read N- to C-terminus: COP9 signalosome complex subunit 5 (440 aa).

The MPN domain maps to 71 to 218 (VLISKLSCEK…MGAFRTIESK (148 aa)). Residues H164, H166, and D177 each contribute to the Zn(2+) site. The short motif at 164–177 (HSHPGYDCWLSNID) is the JAMM motif element. Over residues 319–341 (TQRGDSTETSSFGSMFSGDNTSD) the composition is skewed to polar residues. 2 disordered regions span residues 319-343 (TQRG…SDVD) and 375-399 (SSRS…CHDE).

Belongs to the peptidase M67A family. CSN5 subfamily. In terms of assembly, component of a COP9 signalosome-like (CSN) complex, composed of at least RRI1/CSN5, CSN9, RRI2/CSN10, PCI8/CSN11, CSN12 and CSI1. Within this complex it probably interacts directly with CSN12. Also interacts with RPN5. A divalent metal cation serves as cofactor.

Its subcellular location is the cytoplasm. It localises to the nucleus. Catalytic component of the COP9 signalosome (CSN) complex that acts as an regulator of the ubiquitin (Ubl) conjugation pathway by mediating the deneddylation of the cullin subunit of SCF-type E3 ubiquitin-protein ligase complexes. The CSN complex is involved in the regulation of the mating pheromone response. The sequence is that of COP9 signalosome complex subunit 5 (RRI1) from Saccharomyces cerevisiae (strain ATCC 204508 / S288c) (Baker's yeast).